The chain runs to 2410 residues: Genome polyprotein 1 (2410 aa).

Residues 1–22 are disordered; it reads MEQTLAQAVSRKSKTDTPMAEE. The region spanning 474–632 is the Helicase ATP-binding domain; sequence KMADANNCWS…AARKYPLHVE (159 aa). ATP is bound at residue 487-494; that stretch reads GHTGSGKS. The 167-residue stretch at 647-813 folds into the Helicase C-terminal domain; the sequence is GGGDLLDISK…NVPFYMNETF (167 aa). O-(5'-phospho-RNA)-tyrosine is present on Tyr1234. In terms of domain architecture, Peptidase C4 spans 1359 to 1573; it reads ITLEASTGIL…CGYASHTALF (215 aa). Active-site for nuclear inclusion protein A activity residues include His1404, Asp1440, and Cys1507. Positions 1857–1980 constitute a RdRp catalytic domain; the sequence is WLHGSGDGSR…AISPQFDEEF (124 aa). The tract at residues 2173-2200 is disordered; sequence TRTPTEDDGKLKTPSGARIPSSAADGNW.

It belongs to the bymoviruses polyprotein 1 family. In terms of processing, VPg is uridylylated by the polymerase and is covalently attached to the 5'-end of the genomic RNA. This uridylylated form acts as a nucleotide-peptide primer for the polymerase. Post-translationally, the viral RNA1 of bymoviruses is expressed as a single polyprotein which undergoes post-translational proteolytic processing by the main proteinase NIa-pro resulting in the production of at least eight individual proteins.

It is found in the host cytoplasmic vesicle. Its subcellular location is the virion. It catalyses the reaction RNA(n) + a ribonucleoside 5'-triphosphate = RNA(n+1) + diphosphate. It carries out the reaction Hydrolyzes glutaminyl bonds, and activity is further restricted by preferences for the amino acids in P6 - P1' that vary with the species of potyvirus, e.g. Glu-Xaa-Xaa-Tyr-Xaa-Gln-|-(Ser or Gly) for the enzyme from tobacco etch virus. The natural substrate is the viral polyprotein, but other proteins and oligopeptides containing the appropriate consensus sequence are also cleaved.. Indispensable for virus replication. Functionally, mediates the cap-independent, EIF4E-dependent translation of viral genomic RNAs. Binds to the cap-binding site of host EIF4E and thus interferes with the host EIF4E-dependent mRNA export and translation. VPg-RNA directly binds EIF4E and is a template for transcription. Also forms trimeric complexes with EIF4E-EIF4G, which are templates for translation. In terms of biological role, has RNA-binding and proteolytic activities. Its function is as follows. An RNA-dependent RNA polymerase that plays an essential role in the virus replication. The chain is Genome polyprotein 1 from Hordeum vulgare (Barley).